Here is a 223-residue protein sequence, read N- to C-terminus: N-terminal Xaa-Pro-Lys N-methyltransferase 1 (223 aa).

M1 is modified (N-acetylmethionine). Residue T2 is modified to N-acetylthreonine; in N-terminal Xaa-Pro-Lys N-methyltransferase 1, N-terminally processed. S-adenosyl-L-methionine contacts are provided by residues G69, R74, 91–93 (DVT), 119–120 (LQ), and Q135.

The protein belongs to the methyltransferase superfamily. NTM1 family.

It is found in the nucleus. It catalyses the reaction N-terminal L-alanyl-L-prolyl-L-lysyl-[protein] + 3 S-adenosyl-L-methionine = N-terminal N,N,N-trimethyl-L-alanyl-L-prolyl-L-lysyl-[protein] + 3 S-adenosyl-L-homocysteine + 3 H(+). The enzyme catalyses N-terminal L-seryl-L-prolyl-L-lysyl-[protein] + 3 S-adenosyl-L-methionine = N-terminal N,N,N-trimethyl-L-seryl-L-prolyl-L-lysyl-[protein] + 3 S-adenosyl-L-homocysteine + 3 H(+). It carries out the reaction N-terminal L-prolyl-L-prolyl-L-lysyl-[protein] + 2 S-adenosyl-L-methionine = N-terminal N,N-dimethyl-L-prolyl-L-prolyl-L-lysyl-[protein] + 2 S-adenosyl-L-homocysteine + 2 H(+). In terms of biological role, distributive alpha-N-methyltransferase that methylates the N-terminus of target proteins containing the N-terminal motif [Ala/Gly/Pro/Ser]-Pro-Lys when the initiator Met is cleaved. Specifically catalyzes mono-, di- or tri-methylation of the exposed alpha-amino group of the Ala, Gly or Ser residue in the [Ala/Gly/Ser]-Pro-Lys motif and mono- or di-methylation of Pro in the Pro-Pro-Lys motif. Some of the substrates may be primed by NTMT2-mediated monomethylation. Catalyzes the trimethylation of the N-terminal Gly in CENPA (after removal of Met-1). Responsible for the N-terminal methylation of KLHL31, MYL2, MYL3, RB1, RCC1, RPL23A and SET. Required during mitosis for normal bipolar spindle formation and chromosome segregation via its action on RCC1. This Rattus norvegicus (Rat) protein is N-terminal Xaa-Pro-Lys N-methyltransferase 1 (Ntmt1).